The primary structure comprises 120 residues: uncharacterized protein (120 aa).

The protein to phage T4 y06Q.

This is an uncharacterized protein from Escherichia coli (strain K12).